A 341-amino-acid chain; its full sequence is Coiled-coil domain-containing protein 86 (341 aa).

Residues 1–341 (MGTPLRRSRR…QPPQRPVAKV (341 aa)) form a disordered region. A Phosphoserine modification is found at S18. A compositionally biased stretch (basic and acidic residues) spans 26-49 (EVSRAKRALVDFKSNPEETRELES). S59 carries the phosphoserine modification. Positions 64–73 (PETSPESPCP) are enriched in low complexity. Position 66 is a phosphothreonine (T66). Residues S67, S70, S81, S92, S103, S114, and S124 each carry the phosphoserine modification. Residues 105-114 (AGQTESNPES) show a composition bias toward polar residues. The segment covering 130–139 (EVAHAKEEVI) has biased composition (basic and acidic residues). A phosphoserine mark is found at S142, S169, S170, and S200. A compositionally biased stretch (basic residues) spans 219–235 (GKPKSGRVWKDRSKKRF). The segment covering 254–298 (ERQERKLAKDFARHLEEEKQRRRQEKKERRAENLRRRLENERKAE) has biased composition (basic and acidic residues). Positions 261–304 (AKDFARHLEEEKQRRRQEKKERRAENLRRRLENERKAEIVQVIR) form a coiled coil. Basic residues predominate over residues 307-317 (AKLKKAKKKQL). R323 carries the post-translational modification Citrulline.

In terms of processing, citrullinated by PADI4.

Its subcellular location is the nucleus. It localises to the chromosome. It is found in the nucleolus. Its function is as follows. Required for proper chromosome segregation during mitosis and error-free mitotic progression. In Rattus norvegicus (Rat), this protein is Coiled-coil domain-containing protein 86.